Reading from the N-terminus, the 468-residue chain is UDP-N-acetylmuramate--L-alanine ligase (468 aa).

An ATP-binding site is contributed by G116–T122.

The protein belongs to the MurCDEF family.

Its subcellular location is the cytoplasm. It catalyses the reaction UDP-N-acetyl-alpha-D-muramate + L-alanine + ATP = UDP-N-acetyl-alpha-D-muramoyl-L-alanine + ADP + phosphate + H(+). Its pathway is cell wall biogenesis; peptidoglycan biosynthesis. Functionally, cell wall formation. The protein is UDP-N-acetylmuramate--L-alanine ligase of Fusobacterium nucleatum subsp. nucleatum (strain ATCC 25586 / DSM 15643 / BCRC 10681 / CIP 101130 / JCM 8532 / KCTC 2640 / LMG 13131 / VPI 4355).